Consider the following 314-residue polypeptide: Acetaldehyde dehydrogenase 1 (314 aa).

An NAD(+)-binding site is contributed by 15-18 (SGNI). Cys-133 functions as the Acyl-thioester intermediate in the catalytic mechanism. NAD(+) contacts are provided by residues 164–172 (SAGPGTRAN) and Asn-291.

The protein belongs to the acetaldehyde dehydrogenase family.

The catalysed reaction is acetaldehyde + NAD(+) + CoA = acetyl-CoA + NADH + H(+). This chain is Acetaldehyde dehydrogenase 1, found in Paraburkholderia xenovorans (strain LB400).